A 348-amino-acid polypeptide reads, in one-letter code: DnaJ homolog subfamily B member 5 (348 aa).

Residues 4-68 (DYYKILGIPS…KKRGLYDQYG (65 aa)) form the J domain.

This Homo sapiens (Human) protein is DnaJ homolog subfamily B member 5 (DNAJB5).